A 411-amino-acid chain; its full sequence is Mitogen-activated protein kinase 8 (411 aa).

Residues 26–321 form the Protein kinase domain; the sequence is YQNLKPIGSG…VDEALQHPYI (296 aa). ATP-binding positions include 32–40 and Lys-55; that span reads IGSGAQGIV. Cys-116 is modified (S-nitrosocysteine; in inhibited form). The active-site Proton acceptor is Asp-151. Thr-183 is subject to Phosphothreonine; by MAP2K7. The TXY motif lies at 183 to 185; that stretch reads TPY. Tyr-185 carries the post-translational modification Phosphotyrosine; by MAP2K4. A disordered region spans residues 368–411; it reads KNGVIRGQPSPLGAAVINGSQHPVSSPSVNDMSSMSTDPTLASD. Ser-377 is subject to Phosphoserine. Positions 390–403 are enriched in low complexity; the sequence is PVSSPSVNDMSSMS.

It belongs to the protein kinase superfamily. CMGC Ser/Thr protein kinase family. MAP kinase subfamily. As to quaternary structure, forms a complex with MAPK8IP1 and ARHGEF28. Found in a complex with SH3RF1, RAC1, MAP3K11/MLK3, MAP2K7/MKK7 and MAPK8IP1/JIP1. Found in a complex with SH3RF1, RAC2, MAP3K7/TAK1, MAP2K7/MKK7, MAPK8IP1/JIP1 and MAPK9/JNK2. Binds to at least four scaffolding proteins, MAPK8IP1/JIP-1, MAPK8IP2/JIP-2, MAPK8IP3/JIP-3/JSAP1 and SPAG9/MAPK8IP4/JIP-4. These proteins also bind other components of the JNK signaling pathway. Interacts with TP53, WWOX. Interacts with JAMP. Interacts with NFATC4. Interacts (phosphorylated form) with NFE2; the interaction phosphorylates NFE2 in undifferentiated cells. Interacts with MECOM; regulates JNK signaling. Interacts with PIN1; this interaction mediates MAPK8 conformational changes leading to the binding of MAPK8 to its substrates. Interacts with HSF1 (via D domain and preferentially with hyperphosphorylated form); this interaction occurs under both normal growth conditions and immediately upon heat shock. Interacts with STMN2, STMN3 and STMN4. Interacts with GRIPAP1. Interacts with POU5F1; phosphorylates POU5F1 at 'Ser-347'. Interacts with HSF4. The cofactor is Mg(2+). Dually phosphorylated on Thr-183 and Tyr-185 by MAP2K7 and MAP2K4, which activates the enzyme. Phosphorylated by TAOK2. Phosphorylated form is more concentrated at synapses than none-phosphorylated. Post-translationally, nitrosylated upon IFN-gamma-induced endogenous NO production, which inhibits the enzyme. May be phosphorylated at Thr-183 and Tyr-185 by MAP3K1/MEKK1.

It localises to the cytoplasm. Its subcellular location is the nucleus. The protein localises to the synapse. It carries out the reaction L-seryl-[protein] + ATP = O-phospho-L-seryl-[protein] + ADP + H(+). The enzyme catalyses L-threonyl-[protein] + ATP = O-phospho-L-threonyl-[protein] + ADP + H(+). With respect to regulation, activated by threonine and tyrosine phosphorylation by either of two dual specificity kinases, MAP2K4 and MAP2K7. MAP2K4 shows a strong preference for Tyr-185 while MAP2K7 phosphorylates Tyr-183 preferentially. Inhibited by dual specificity phosphatases, such as DUSP1. Inhibited by SERPINB3. Inhibited by IFN-gamma-induced S-nitrosylation. Its function is as follows. Serine/threonine-protein kinase involved in various processes such as cell proliferation, differentiation, migration, transformation and programmed cell death. Extracellular stimuli such as pro-inflammatory cytokines or physical stress stimulate the stress-activated protein kinase/c-Jun N-terminal kinase (SAP/JNK) signaling pathway. In this cascade, two dual specificity kinases MAP2K4/MKK4 and MAP2K7/MKK7 phosphorylate and activate MAPK8/JNK1. In turn, MAPK8/JNK1 phosphorylates a number of transcription factors, primarily components of AP-1 such as JUN, JDP2 and ATF2 and thus regulates AP-1 transcriptional activity. Phosphorylates the replication licensing factor CDT1, inhibiting the interaction between CDT1 and the histone H4 acetylase HBO1 to replication origins. Loss of this interaction abrogates the acetylation required for replication initiation. Promotes stressed cell apoptosis by phosphorylating key regulatory factors including p53/TP53 and Yes-associates protein YAP1. In T-cells, MAPK8 and MAPK9 are required for polarized differentiation of T-helper cells into Th1 cells. Contributes to the survival of erythroid cells by phosphorylating the antagonist of cell death BAD upon EPO stimulation. Mediates starvation-induced BCL2 phosphorylation, BCL2 dissociation from BECN1, and thus activation of autophagy. Phosphorylates STMN2 and hence regulates microtubule dynamics, controlling neurite elongation in cortical neurons. In the developing brain, through its cytoplasmic activity on STMN2, negatively regulates the rate of exit from multipolar stage and of radial migration from the ventricular zone. Phosphorylates several other substrates including heat shock factor protein 4 (HSF4), the deacetylase SIRT1, ELK1, or the E3 ligase ITCH. Phosphorylates the CLOCK-BMAL1 heterodimer and plays a role in the regulation of the circadian clock. Phosphorylates the heat shock transcription factor HSF1, suppressing HSF1-induced transcriptional activity. Phosphorylates POU5F1, which results in the inhibition of POU5F1's transcriptional activity and enhances its proteasomal degradation. Phosphorylates JUND and this phosphorylation is inhibited in the presence of MEN1. In neurons, phosphorylates SYT4 which captures neuronal dense core vesicles at synapses. Phosphorylates EIF4ENIF1/4-ET in response to oxidative stress, promoting P-body assembly. Phosphorylates SIRT6 in response to oxidative stress, stimulating its mono-ADP-ribosyltransferase activity. Phosphorylates NLRP3, promoting assembly of the NLRP3 inflammasome. Phosphorylates ALKBH5 in response to reactive oxygen species (ROS), promoting ALKBH5 sumoylation and inactivation. The polypeptide is Mitogen-activated protein kinase 8 (Mapk8) (Rattus norvegicus (Rat)).